Reading from the N-terminus, the 288-residue chain is Glucose uptake protein GlcU (288 aa).

A run of 10 helical transmembrane segments spans residues 4–26 (LIAL…VGGG), 33–51 (GTTF…TGNA), 56–75 (LTII…GQGY), 82–104 (LIGV…TLFS), 114–136 (GVQV…LTSI), 148–170 (NFGK…VVVA), 180–197 (ALFF…ILSA), 206–225 (TLWN…FMFY), 230–252 (VGVA…GGIF), and 264–283 (IGIW…SEIL).

It belongs to the GRP transporter (TC 2.A.7.5) family.

The protein localises to the cell membrane. In terms of biological role, involved in the uptake of glucose. The protein is Glucose uptake protein GlcU (glcU) of Staphylococcus xylosus.